A 707-amino-acid polypeptide reads, in one-letter code: Anaerobic ribonucleoside-triphosphate reductase (707 aa).

The ATP-cone domain occupies 4–95 (FGVIKRDGSR…EYRHDRDLAR (92 aa)). The region spanning 584-707 (KKVNPYDKLD…EEVKRRVKHL (124 aa)) is the Glycine radical domain. Zn(2+) is bound by residues cysteine 645, cysteine 648, cysteine 663, and cysteine 666. Glycine 682 carries the post-translational modification Glycine radical.

Belongs to the anaerobic ribonucleoside-triphosphate reductase family. Forms a tetramer composed of two NrdD and two NrdG subunits.

It catalyses the reaction a ribonucleoside 5'-triphosphate + formate + H(+) = a 2'-deoxyribonucleoside 5'-triphosphate + CO2 + H2O. Activated under anaerobic conditions by NrdG, a tightly associated activase. Activation involves the formation of a glycyl radical at Gly-682. Its function is as follows. Catalyzes the conversion of ribonucleotides into deoxyribonucleotides, which are required for DNA synthesis and repair. The sequence is that of Anaerobic ribonucleoside-triphosphate reductase (nrdD) from Haemophilus influenzae (strain ATCC 51907 / DSM 11121 / KW20 / Rd).